Consider the following 206-residue polypeptide: Ribosomal RNA large subunit methyltransferase E (206 aa).

S-adenosyl-L-methionine is bound by residues G60, W62, D80, D96, and D121. K161 functions as the Proton acceptor in the catalytic mechanism.

Belongs to the class I-like SAM-binding methyltransferase superfamily. RNA methyltransferase RlmE family.

It is found in the cytoplasm. It catalyses the reaction uridine(2552) in 23S rRNA + S-adenosyl-L-methionine = 2'-O-methyluridine(2552) in 23S rRNA + S-adenosyl-L-homocysteine + H(+). Functionally, specifically methylates the uridine in position 2552 of 23S rRNA at the 2'-O position of the ribose in the fully assembled 50S ribosomal subunit. This chain is Ribosomal RNA large subunit methyltransferase E, found in Legionella pneumophila (strain Corby).